Reading from the N-terminus, the 349-residue chain is MSNKPSLSYKDAGVDIDAGDALVQRIKSVAKATSRPEVVGGLGGFGALCRIPTGYTSPLLVSGTDGVGTKLKLALQLNRHDTIGIDLVAMCVNDLLVCGAEPLFFLDYYATGKLDVDVAATVVTGIGEGCKLSNCALIGGETAEMPGMYQDDDYDLAGFCVGVVEEAEVITGENVAEGDVLIALASSGAHSNGYSLVRKVIEVSGVDVTSSNEQLDGQSIQDALMAPTRIYVKAIKALQDTLGSSALHAMSHITGGGLTDNLPRVLPETLAASIDTNSWQFSELFTWLQNQGNIEQSEMYRTFNCGVGFVIVVPKDKAEAAIQTLNDAGEKAWKLGEMVKREADAVVYR.

This sequence belongs to the AIR synthase family.

It is found in the cytoplasm. The enzyme catalyses 2-formamido-N(1)-(5-O-phospho-beta-D-ribosyl)acetamidine + ATP = 5-amino-1-(5-phospho-beta-D-ribosyl)imidazole + ADP + phosphate + H(+). Its pathway is purine metabolism; IMP biosynthesis via de novo pathway; 5-amino-1-(5-phospho-D-ribosyl)imidazole from N(2)-formyl-N(1)-(5-phospho-D-ribosyl)glycinamide: step 2/2. This chain is Phosphoribosylformylglycinamidine cyclo-ligase, found in Psychrobacter cryohalolentis (strain ATCC BAA-1226 / DSM 17306 / VKM B-2378 / K5).